The primary structure comprises 311 residues: HPr kinase/phosphorylase (311 aa).

Active-site residues include His138 and Lys159. 153 to 160 (GDSGIGKS) is an ATP binding site. Ser160 contacts Mg(2+). The Proton acceptor; for phosphorylation activity. Proton donor; for dephosphorylation activity role is filled by Asp177. Positions 201–210 (IEIRGVGIID) are important for the catalytic mechanism of both phosphorylation and dephosphorylation. Glu202 contacts Mg(2+). Arg243 is an active-site residue. Residues 264–269 (PVKTGR) are important for the catalytic mechanism of dephosphorylation.

This sequence belongs to the HPrK/P family. As to quaternary structure, homohexamer. Requires Mg(2+) as cofactor.

It carries out the reaction [HPr protein]-L-serine + ATP = [HPr protein]-O-phospho-L-serine + ADP + H(+). The catalysed reaction is [HPr protein]-O-phospho-L-serine + phosphate + H(+) = [HPr protein]-L-serine + diphosphate. Functionally, catalyzes the ATP- as well as the pyrophosphate-dependent phosphorylation of a specific serine residue in HPr, a phosphocarrier protein of the phosphoenolpyruvate-dependent sugar phosphotransferase system (PTS). HprK/P also catalyzes the pyrophosphate-producing, inorganic phosphate-dependent dephosphorylation (phosphorolysis) of seryl-phosphorylated HPr (P-Ser-HPr). The two antagonistic activities of HprK/P are regulated by several intracellular metabolites, which change their concentration in response to the absence or presence of rapidly metabolisable carbon sources (glucose, fructose, etc.) in the growth medium. Therefore, by controlling the phosphorylation state of HPr, HPrK/P is a sensor enzyme that plays a major role in the regulation of carbon metabolism and sugar transport: it mediates carbon catabolite repression (CCR), and regulates PTS-catalyzed carbohydrate uptake and inducer exclusion. The sequence is that of HPr kinase/phosphorylase from Streptococcus pneumoniae serotype 2 (strain D39 / NCTC 7466).